The following is a 434-amino-acid chain: UDP-N-acetylglucosamine 1-carboxyvinyltransferase (434 aa).

34 to 35 (KN) is a binding site for phosphoenolpyruvate. Arginine 104 contributes to the UDP-N-acetyl-alpha-D-glucosamine binding site. Residue cysteine 128 is the Proton donor of the active site. 2-(S-cysteinyl)pyruvic acid O-phosphothioketal is present on cysteine 128. Residues aspartate 319 and isoleucine 341 each coordinate UDP-N-acetyl-alpha-D-glucosamine.

Belongs to the EPSP synthase family. MurA subfamily.

It localises to the cytoplasm. The catalysed reaction is phosphoenolpyruvate + UDP-N-acetyl-alpha-D-glucosamine = UDP-N-acetyl-3-O-(1-carboxyvinyl)-alpha-D-glucosamine + phosphate. Its pathway is cell wall biogenesis; peptidoglycan biosynthesis. Its function is as follows. Cell wall formation. Adds enolpyruvyl to UDP-N-acetylglucosamine. The chain is UDP-N-acetylglucosamine 1-carboxyvinyltransferase from Prochlorococcus marinus (strain MIT 9313).